A 699-amino-acid polypeptide reads, in one-letter code: Elongation factor G 2 (699 aa).

The 283-residue stretch at Glu8 to Thr290 folds into the tr-type G domain. GTP contacts are provided by residues Ala17 to Thr24, Asp88 to His92, and Asn142 to Asp145.

It belongs to the TRAFAC class translation factor GTPase superfamily. Classic translation factor GTPase family. EF-G/EF-2 subfamily.

It is found in the cytoplasm. Catalyzes the GTP-dependent ribosomal translocation step during translation elongation. During this step, the ribosome changes from the pre-translocational (PRE) to the post-translocational (POST) state as the newly formed A-site-bound peptidyl-tRNA and P-site-bound deacylated tRNA move to the P and E sites, respectively. Catalyzes the coordinated movement of the two tRNA molecules, the mRNA and conformational changes in the ribosome. This chain is Elongation factor G 2, found in Colwellia psychrerythraea (strain 34H / ATCC BAA-681) (Vibrio psychroerythus).